Reading from the N-terminus, the 171-residue chain is Translation initiation factor IF-3 (171 aa).

This sequence belongs to the IF-3 family. Monomer.

It localises to the cytoplasm. In terms of biological role, IF-3 binds to the 30S ribosomal subunit and shifts the equilibrium between 70S ribosomes and their 50S and 30S subunits in favor of the free subunits, thus enhancing the availability of 30S subunits on which protein synthesis initiation begins. In Halalkalibacterium halodurans (strain ATCC BAA-125 / DSM 18197 / FERM 7344 / JCM 9153 / C-125) (Bacillus halodurans), this protein is Translation initiation factor IF-3.